The primary structure comprises 450 residues: uncharacterized protein (450 aa).

12 helical membrane-spanning segments follow: residues 10–30 (IIVL…LVIA), 53–73 (LGGG…AIAI), 95–115 (TAGN…LFAI), 120–140 (LLPV…SIFN), 148–168 (AVAC…PVGF), 199–219 (LAML…IFIT), 242–262 (IANI…ATFA), 267–287 (TSST…CGIF), 302–322 (LMAM…VINA), 343–363 (IAAL…GSSF), 378–398 (LSFG…AALG), and 428–448 (VVPT…IAAM).

The protein resides in the cell membrane. This is an uncharacterized protein from Haemophilus influenzae (strain ATCC 51907 / DSM 11121 / KW20 / Rd).